Here is a 24-residue protein sequence, read N- to C-terminus: FWGALVAGLAPKVAIGIKAINKKG.

Expressed by the venom gland.

The protein resides in the secreted. In terms of biological role, antimicrobial peptide active against Gram-negative bacterium E.coli MH1 (MIC=2.5 uM) and P.aeruginosa PAO1 (MIC=10 uM) and against Gram-positive bacterium A.globiformis VKM Ac-1112 (MIC=0.6 uM). The polypeptide is M-ectatotoxin-Eb2b (Ectatomma brunneum (Ant)).